We begin with the raw amino-acid sequence, 56 residues long: Pituitary adenylate cyclase-activating polypeptide (56 aa).

Residues 42–50 are important for receptor binding; sequence VKKYLAAVL. Leu50 carries the leucine amide modification.

The protein belongs to the glucagon family. In terms of assembly, interacts with ADCYAP1R1 (via N-terminal extracellular domain).

It localises to the secreted. PACAP is a neuropeptide involved in diverse array of physiological processes through activating the PACAP subfamily of class B1 G protein-coupled receptors: VIP receptor 1 (VIPR1), VIP receptor 2 (VIPR2), and PACAP type I receptor (ADCYAP1R1). Exerts neuroprotective and general cytoprotective effects due to anti-apoptotic, anti-inflammatory, and antioxidant actions. In Heloderma suspectum (Gila monster), this protein is Pituitary adenylate cyclase-activating polypeptide (Adcyap1).